The following is a 445-amino-acid chain: NAD-specific glutamate dehydrogenase (445 aa).

K124 is a catalytic residue.

The protein belongs to the Glu/Leu/Phe/Val dehydrogenases family. In terms of assembly, homohexamer.

Its subcellular location is the cell surface. The enzyme catalyses L-glutamate + NAD(+) + H2O = 2-oxoglutarate + NH4(+) + NADH + H(+). Functionally, probably involved in degradation rather than biosynthesis of glutamate. This is NAD-specific glutamate dehydrogenase (gdh) from Porphyromonas gingivalis (strain ATCC 33277 / DSM 20709 / CIP 103683 / JCM 12257 / NCTC 11834 / 2561).